We begin with the raw amino-acid sequence, 161 residues long: Large ribosomal subunit protein mL50 (161 aa).

The segment at 27–51 (WGGHSKKEEKEVEENSIIPQEKKEP) is disordered.

Belongs to the mitochondrion-specific ribosomal protein mL50 family. As to quaternary structure, component of the mitochondrial ribosome large subunit (39S) which comprises a 16S rRNA and about 50 distinct proteins.

It localises to the mitochondrion. In Gallus gallus (Chicken), this protein is Large ribosomal subunit protein mL50 (MRPL50).